Reading from the N-terminus, the 232-residue chain is Phycobilisome rod-core linker polypeptide cpcG (232 aa).

Residues 11 to 191 (STQNQRVDGY…PRYGADFKEK (181 aa)) form the PBS-linker domain.

This sequence belongs to the phycobilisome linker protein family. As to quaternary structure, the phycobilisome is a hemidiscoidal structure that is composed of two distinct substructures: a core complex and a number of rods radiating from the core.

The protein resides in the plastid. It is found in the chloroplast. Its subcellular location is the chloroplast thylakoid membrane. Its function is as follows. Rod-core linker protein required for attachment of phycocyanin to allophycocyanin in cores of phycobilisomes. Linker polypeptides determine the state of aggregation and the location of the disk-shaped phycobiliprotein units within the phycobilisome and modulate their spectroscopic properties in order to mediate a directed and optimal energy transfer. The protein is Phycobilisome rod-core linker polypeptide cpcG (cpcG) of Pyropia yezoensis (Susabi-nori).